The sequence spans 145 residues: Large ribosomal subunit protein uL15 (145 aa).

The tract at residues 20–39 (GRVGKHRKHPSGRGNAGGEH) is disordered.

Belongs to the universal ribosomal protein uL15 family.

This Trypanosoma brucei brucei protein is Large ribosomal subunit protein uL15 (RPL27A).